The following is a 793-amino-acid chain: E3 UFM1-protein ligase 1 (793 aa).

The interval 2 to 212 (AADWEEIRRL…INNLLNLYGF (211 aa)) is required for E3 UFM1-protein ligase activity. Disordered regions lie at residues 405–472 (ALLE…RNKL) and 745–793 (GAEK…SVTE). Residues 427–439 (EGGGSVKSGGGGN) show a composition bias toward gly residues. Over residues 767–781 (SLQRELHSLSRDIKD) the composition is skewed to basic and acidic residues.

It belongs to the UFL1 family. As to quaternary structure, catalytic component of the UFM1 ribosome E3 ligase (UREL) complex. Interacts with E2-like enzyme UFC1.

The protein resides in the endoplasmic reticulum membrane. It localises to the cytoplasm. The protein localises to the cytosol. It is found in the nucleus. Its subcellular location is the chromosome. E3 protein ligase that mediates ufmylation, the covalent attachment of the ubiquitin-like modifier UFM1 to lysine residues on target proteins, and which plays a key role in various processes, such as ribosome recycling, response to DNA damage, interferon response or reticulophagy (also called ER-phagy). As part of the UREL complex, plays a key role in ribosome recycling by catalyzing mono-ufmylation of RPL26/uL24 subunit of the 60S ribosome. Ufmylation of RPL26/uL24 occurs on free 60S ribosomes following ribosome dissociation: it weakens the junction between post-termination 60S subunits and SEC61 translocons, promoting release and recycling of the large ribosomal subunit from the endoplasmic reticulum membrane. Ufmylation of RPL26/uL24 and subsequent 60S ribosome recycling either take place after normal termination of translation or after ribosome stalling during cotranslational translocation at the endoplasmic reticulum. Involved in reticulophagy in response to endoplasmic reticulum stress by mediating ufmylation of proteins such as CYB5R3 and RPN1, thereby promoting lysosomal degradation of ufmylated proteins. Ufmylation in response to endoplasmic reticulum stress is essential for processes such as hematopoiesis, blood vessel morphogenesis or inflammatory response. The chain is E3 UFM1-protein ligase 1 from Danio rerio (Zebrafish).